The following is a 174-amino-acid chain: Variant surface antigen B (174 aa).

Residues 1 to 29 (MKKSIFSKKLLVSFGSLVALASIPLIAIS) form the signal peptide. Cysteine 30 carries the N-palmitoyl cysteine lipid modification. Cysteine 30 carries S-diacylglycerol cysteine lipidation. A disordered region spans residues 32–174 (QTNTDKSQQP…SQDSGNGSTK (143 aa)). A compositionally biased stretch (low complexity) spans 38–49 (SQQPGSGSSTSG). Residues 50-75 (GQSGTGLGSGTTTGGQSGTTTGGRSG) show a composition bias toward gly residues. The segment covering 76–97 (SGSSSSTTGGQTGTGSDSQDSG) has biased composition (low complexity). Repeat copies occupy residues 88–99 (GTGSDSQDSGAK), 100–111 (GTGSDSQDSGAK), 112–123 (GTGSDSQDSGAK), 124–135 (GTGSDSQDSGAK), 136–147 (GTGSDSQDSGAK), 148–159 (GTGSDSQDSGAK), and 160–171 (GTGSDSQDSGNG). The 7 X 12 AA tandem repeats stretch occupies residues 88–171 (GTGSDSQDSG…GSDSQDSGNG (84 aa)). Over residues 102–174 (GSDSQDSGAK…SQDSGNGSTK (73 aa)) the composition is skewed to polar residues.

It is found in the cell membrane. In terms of biological role, responsible for the antigenic diversity for host adaptation. The protein is Variant surface antigen B (vlpB) of Mesomycoplasma hyorhinis (Mycoplasma hyorhinis).